The sequence spans 150 residues: Histone H3-like centromeric protein A (150 aa).

Positions 1–56 (MRPGSTPASRRKSRPPRRVSPPLPTTSTRSPGRPSAPEQRKAPRATPKKRFRPGTR) are disordered. Residues 25–37 (TTSTRSPGRPSAP) are compositionally biased toward low complexity. Residues 42–53 (APRATPKKRFRP) are compositionally biased toward basic residues. Positions 53–150 (PGTRALMEIR…RIRGVTEGLG (98 aa)) are H3-like.

Belongs to the histone H3 family. Component of centromeric nucleosomes, where DNA is wrapped around a histone octamer core. The octamer contains two molecules each of H2A, H2B, CENPA and H4 assembled in one CENPA-H4 heterotetramer and two H2A-H2B heterodimers. CENPA modulates the DNA-binding characteristics of nucleosomes so that protruding DNA ends have higher flexibility than in nucleosomes containing conventional histone H3.

The protein localises to the nucleus. It is found in the chromosome. Its subcellular location is the centromere. Functionally, histone H3-like nucleosomal protein that is specifically found in centromeric nucleosomes. Replaces conventional H3 in the nucleosome core of centromeric chromatin that serves as an assembly site for the inner kinetochore. The presence of CENPA subtly modifies the nucleosome structure and the way DNA is wrapped around the nucleosome and gives rise to protruding DNA ends that are less well-ordered and rigid compared to nucleosomes containing histone H3. May serve as an epigenetic mark that propagates centromere identity through replication and cell division. Required for recruitment and assembly of kinetochore proteins, and as a consequence required for progress through mitosis, chromosome segregation and cytokinesis. The sequence is that of Histone H3-like centromeric protein A (cenpa) from Xenopus tropicalis (Western clawed frog).